Reading from the N-terminus, the 251-residue chain is Ubiquinone/menaquinone biosynthesis C-methyltransferase UbiE (251 aa).

S-adenosyl-L-methionine contacts are provided by residues T74, D95, 123-124 (NA), and S140.

It belongs to the class I-like SAM-binding methyltransferase superfamily. MenG/UbiE family.

The catalysed reaction is a 2-demethylmenaquinol + S-adenosyl-L-methionine = a menaquinol + S-adenosyl-L-homocysteine + H(+). It catalyses the reaction a 2-methoxy-6-(all-trans-polyprenyl)benzene-1,4-diol + S-adenosyl-L-methionine = a 5-methoxy-2-methyl-3-(all-trans-polyprenyl)benzene-1,4-diol + S-adenosyl-L-homocysteine + H(+). It participates in quinol/quinone metabolism; menaquinone biosynthesis; menaquinol from 1,4-dihydroxy-2-naphthoate: step 2/2. The protein operates within cofactor biosynthesis; ubiquinone biosynthesis. Functionally, methyltransferase required for the conversion of demethylmenaquinol (DMKH2) to menaquinol (MKH2) and the conversion of 2-polyprenyl-6-methoxy-1,4-benzoquinol (DDMQH2) to 2-polyprenyl-3-methyl-6-methoxy-1,4-benzoquinol (DMQH2). The protein is Ubiquinone/menaquinone biosynthesis C-methyltransferase UbiE of Citrobacter koseri (strain ATCC BAA-895 / CDC 4225-83 / SGSC4696).